A 275-amino-acid polypeptide reads, in one-letter code: Large ribosomal subunit protein uL2c (275 aa).

Residues 224–263 (VMNPVDHPHGGGEGRAPIGRKRPLTPWGRPALGKKSRKNH) are disordered.

It belongs to the universal ribosomal protein uL2 family. As to quaternary structure, part of the 50S ribosomal subunit.

It is found in the plastid. It localises to the chloroplast. This chain is Large ribosomal subunit protein uL2c (rpl2), found in Chaetosphaeridium globosum (Charophycean green alga).